The primary structure comprises 203 residues: Urease accessory protein UreG (203 aa).

Residue 10–17 (GPVGAGKT) participates in GTP binding.

This sequence belongs to the SIMIBI class G3E GTPase family. UreG subfamily. In terms of assembly, homodimer. UreD, UreF and UreG form a complex that acts as a GTP-hydrolysis-dependent molecular chaperone, activating the urease apoprotein by helping to assemble the nickel containing metallocenter of UreC. The UreE protein probably delivers the nickel.

The protein localises to the cytoplasm. In terms of biological role, facilitates the functional incorporation of the urease nickel metallocenter. This process requires GTP hydrolysis, probably effectuated by UreG. The chain is Urease accessory protein UreG from Lachnoclostridium phytofermentans (strain ATCC 700394 / DSM 18823 / ISDg) (Clostridium phytofermentans).